Here is a 156-residue protein sequence, read N- to C-terminus: Nuclear cap-binding protein subunit 2 (156 aa).

An N-acetylserine modification is found at Ser2. Phosphoserine is present on residues Ser13 and Ser18. MRNA-binding positions include Tyr20, Tyr43, 112–116, 123–127, and 133–134; these read RTDWD, RQYGR, and QV. The 79-residue stretch at 40 to 118 folds into the RRM domain; that stretch reads CTLYVGNLSF…RIIRTDWDAG (79 aa). Residues 124–156 are disordered; the sequence is QYGRGRSGGQVRDEYREDYDAGRGGYGKLAQKQ. Over residues 134 to 144 the composition is skewed to basic and acidic residues; the sequence is VRDEYREDYDA. Omega-N-methylarginine is present on Arg146.

The protein belongs to the RRM NCBP2 family. Component of the nuclear cap-binding complex (CBC), a heterodimer composed of NCBP1/CBP80 and NCBP2/CBP20 that interacts with m7GpppG-capped RNA. Found in a U snRNA export complex with PHAX/RNUXA, NCBP1/CBP80, NCBP2/CBP20, RAN, XPO1 and m7G-capped RNA. Interacts with PHAX/RNUXA, EIF4G1, HNRNPF, HNRNPH1 and ALYREF/THOC4/ALY. Interacts with SRRT/ARS2 and KPNA3.

The protein resides in the nucleus. The protein localises to the cytoplasm. In terms of biological role, component of the cap-binding complex (CBC), which binds co-transcriptionally to the 5' cap of pre-mRNAs and is involved in various processes such as pre-mRNA splicing, translation regulation, nonsense-mediated mRNA decay, RNA-mediated gene silencing (RNAi) by microRNAs (miRNAs) and mRNA export. The CBC complex is involved in mRNA export from the nucleus via its interaction with ALYREF/THOC4/ALY, leading to the recruitment of the mRNA export machinery to the 5' end of mRNA and to mRNA export in a 5' to 3' direction through the nuclear pore. The CBC complex is also involved in mediating U snRNA and intronless mRNAs export from the nucleus. The CBC complex is essential for a pioneer round of mRNA translation, before steady state translation when the CBC complex is replaced by cytoplasmic cap-binding protein eIF4E. The pioneer round of mRNA translation mediated by the CBC complex plays a central role in nonsense-mediated mRNA decay (NMD), NMD only taking place in mRNAs bound to the CBC complex, but not on eIF4E-bound mRNAs. The CBC complex enhances NMD in mRNAs containing at least one exon-junction complex (EJC) via its interaction with UPF1, promoting the interaction between UPF1 and UPF2. The CBC complex is also involved in 'failsafe' NMD, which is independent of the EJC complex, while it does not participate in Staufen-mediated mRNA decay (SMD). During cell proliferation, the CBC complex is also involved in microRNAs (miRNAs) biogenesis via its interaction with SRRT/ARS2, thereby being required for miRNA-mediated RNA interference. The CBC complex also acts as a negative regulator of PARN, thereby acting as an inhibitor of mRNA deadenylation. In the CBC complex, NCBP2/CBP20 recognizes and binds capped RNAs (m7GpppG-capped RNA) but requires NCBP1/CBP80 to stabilize the movement of its N-terminal loop and lock the CBC into a high affinity cap-binding state with the cap structure. The conventional cap-binding complex with NCBP2 binds both small nuclear RNA (snRNA) and messenger (mRNA) and is involved in their export from the nucleus. The protein is Nuclear cap-binding protein subunit 2 (Ncbp2) of Mus musculus (Mouse).